The sequence spans 426 residues: Cephalotocin receptor 2 (426 aa).

Topologically, residues 1–51 (MYQAMEVESTSPSGFFLDFYTQSTIPTTDFLNNTNSSHPIRDEKLVKIEIA) are extracellular. N-linked (GlcNAc...) asparagine glycans are attached at residues N32 and N35. Residues 52–72 (VLGTCFTLAIINNLCVLLVLL) traverse the membrane as a helical segment. The Cytoplasmic portion of the chain corresponds to 73–84 (WRRKKVRRMQMF). A helical transmembrane segment spans residues 85–105 (ILHLSIADLIVAFFNILPQLI). Topologically, residues 106 to 120 (WDITFRFMAGDAMCR) are extracellular. C119 and C198 are disulfide-bonded. The chain crosses the membrane as a helical span at residues 121–141 (FIKYAQMFSLYLSTYILIMTA). Over 142 to 165 (VDRYRAICHPLSNQTWTPCMVYCK) the chain is Cytoplasmic. Residues 166–186 (IFIAYAIATIFSIPQAILFQM) traverse the membrane as a helical segment. The Extracellular portion of the chain corresponds to 187–208 (QEVNEGSGIYDCWVHFEPAWVL). Residues 209–229 (TAYALYIFFALYLIPILILFF) traverse the membrane as a helical segment. The Cytoplasmic segment spans residues 230-288 (TYGSICYTIWAKYRHAIKTKKDANTRYPQRRKKKGVILRTHSVHGFSKAKLNSVKLTFA). A helical transmembrane segment spans residues 289-309 (VIVTYIICWSPFFVSQIWWLF). Topologically, residues 310–319 (DETVVGNAGV) are extracellular. The helical transmembrane segment at 320 to 340 (VVILLMACLNSCTNPWIYLIF) threads the bilayer. Over 341–426 (NRNYISNVLP…DQFIYSDKTT (86 aa)) the chain is Cytoplasmic. The tract at residues 373-426 (GSVRRDSRKTSDPKRISESRRISDARRISGKTQKNNSSSPRKTSDQFIYSDKTT) is disordered. Over residues 375–399 (VRRDSRKTSDPKRISESRRISDARR) the composition is skewed to basic and acidic residues. Polar residues predominate over residues 402-426 (GKTQKNNSSSPRKTSDQFIYSDKTT).

The protein belongs to the G-protein coupled receptor 1 family. Vasopressin/oxytocin receptor subfamily. In terms of tissue distribution, present in various peripheral tissues with highest expression in branchia and vas deferens. Very low expression detected in nervous system.

It is found in the cell membrane. Functionally, acts as a receptor for cephalotocin. The protein is Cephalotocin receptor 2 of Octopus vulgaris (Common octopus).